Reading from the N-terminus, the 475-residue chain is MAQHDFVPAWLNFSTPQSAKSSTATFDKHGEHLSRGEGRFGISRRRHNSSDGFFNNGPLRTTGDSWHQPSLFRHDSVDSGVSKGAYAGTTGNLSGWHGSSRGHDGMSQRAGGSTGNHRHWNGSFHSRKGCAFQEKTPTEIREEKKEDKVEKLQFEEEDFPSLNPEAGKQNQPCRPIGTPSGVWENPPSAKQPSKMLVIKKISKEDPAAAFSAAFTSGSHHANGNKVSTMVPSVYKNLVPKPAPPPSKPNAWKANRMEHKPGSLSSSREAALTNPVSVTKPVVLAAGVVLNAPKESPSSTTPPIEISSSRLTKLTRRTTDRKSEFLKTLKDERNEDCSQSRDCDKLEGLRLEGSHTPEPKENGEQGCLQNGLSLPMVEEREVLSHSLEAEHRLLKAMGWQEYPENDESCLPLTEDELKEFHTRTEQLRRNGFVKNGFLQGRSSSLFSPWRSTCIAECEDSDTETSSSETSDDDAWK.

Phosphoserine is present on residues S49 and S76. 2 disordered regions span residues N92–G115 and P160–Q191. At S202 the chain carries Phosphoserine. 2 disordered regions span residues L237–L271 and P292–T318. Low complexity predominate over residues E294–T311. A Phosphothreonine modification is found at T300. S383 is modified (phosphoserine). Positions C456–K475 are disordered.

This sequence belongs to the vasculin family.

It is found in the nucleus. Possible transcription factor. This Rattus norvegicus (Rat) protein is Vasculin-like protein 1 (Gpbp1l1).